The sequence spans 104 residues: Large ribosomal subunit protein bL21 (104 aa).

It belongs to the bacterial ribosomal protein bL21 family. In terms of assembly, part of the 50S ribosomal subunit. Contacts protein L20.

Its function is as follows. This protein binds to 23S rRNA in the presence of protein L20. This is Large ribosomal subunit protein bL21 from Pseudomonas entomophila (strain L48).